Reading from the N-terminus, the 430-residue chain is Adenylosuccinate synthetase (430 aa).

Residues 13–19 (GDEGKGK) and 41–43 (GHT) each bind GTP. The active-site Proton acceptor is Asp14. Mg(2+) contacts are provided by Asp14 and Gly41. Residues 14–17 (DEGK), 39–42 (NAGH), Thr130, Arg144, Gln225, Thr240, and Arg304 contribute to the IMP site. Catalysis depends on His42, which acts as the Proton donor. Position 300 to 306 (300 to 306 (STTGRAR)) interacts with substrate. GTP is bound by residues Arg306, 332-334 (KLD), and 414-416 (STG).

This sequence belongs to the adenylosuccinate synthetase family. In terms of assembly, homodimer. The cofactor is Mg(2+).

The protein localises to the cytoplasm. The catalysed reaction is IMP + L-aspartate + GTP = N(6)-(1,2-dicarboxyethyl)-AMP + GDP + phosphate + 2 H(+). It functions in the pathway purine metabolism; AMP biosynthesis via de novo pathway; AMP from IMP: step 1/2. Plays an important role in the de novo pathway of purine nucleotide biosynthesis. Catalyzes the first committed step in the biosynthesis of AMP from IMP. The chain is Adenylosuccinate synthetase from Alcanivorax borkumensis (strain ATCC 700651 / DSM 11573 / NCIMB 13689 / SK2).